The chain runs to 100 residues: Urease subunit gamma (100 aa).

Belongs to the urease gamma subunit family. In terms of assembly, heterotrimer of UreA (gamma), UreB (beta) and UreC (alpha) subunits. Three heterotrimers associate to form the active enzyme.

It localises to the cytoplasm. The catalysed reaction is urea + 2 H2O + H(+) = hydrogencarbonate + 2 NH4(+). It participates in nitrogen metabolism; urea degradation; CO(2) and NH(3) from urea (urease route): step 1/1. The sequence is that of Urease subunit gamma from Bordetella pertussis (strain Tohama I / ATCC BAA-589 / NCTC 13251).